The primary structure comprises 299 residues: MKDLHNREIKSLRISITPQCNLNCFYCHKEGHNIDNNKLMTPTEIGEMVKYSLKYGINKIKISGGEPLLRNDLPEIIRNIKNLKNNQIKDISLTTNGILLEKYAQKLKDAGLDRVNVSLDTLDPELYKKITGGNVELVKRGIEKAVEAGLKPIKINFVVMSNTVGGLNDIMDYCRKMGVILQIIEFMPVDEKLKKYHYDINKIEEEISKKSDKTMVRKFMQNRKKYLVDGLEIEFVRPMDNTEFCSHCTRIRLTYDGLLKPCLLRDDNLVDVLTPLRNGEDINKCFIKCIDRRELYFKE.

Positions 4–229 (LHNREIKSLR…MQNRKKYLVD (226 aa)) constitute a Radical SAM core domain. Position 13 (Arg13) interacts with GTP. Residues Cys20 and Cys24 each coordinate [4Fe-4S] cluster. Tyr26 is an S-adenosyl-L-methionine binding site. Position 27 (Cys27) interacts with [4Fe-4S] cluster. Residue Lys61 coordinates GTP. Gly65 provides a ligand contact to S-adenosyl-L-methionine. A GTP-binding site is contributed by Thr94. Ser118 is a binding site for S-adenosyl-L-methionine. Lys154 is a binding site for GTP. Residues Cys245 and Cys248 each contribute to the [4Fe-4S] cluster site. GTP is bound at residue 250 to 252 (RIR). Residue Cys262 participates in [4Fe-4S] cluster binding.

It belongs to the radical SAM superfamily. MoaA family. Requires [4Fe-4S] cluster as cofactor.

The enzyme catalyses GTP + AH2 + S-adenosyl-L-methionine = (8S)-3',8-cyclo-7,8-dihydroguanosine 5'-triphosphate + 5'-deoxyadenosine + L-methionine + A + H(+). Its pathway is cofactor biosynthesis; molybdopterin biosynthesis. Its function is as follows. Catalyzes the cyclization of GTP to (8S)-3',8-cyclo-7,8-dihydroguanosine 5'-triphosphate. The polypeptide is Probable GTP 3',8-cyclase (Methanococcus aeolicus (strain ATCC BAA-1280 / DSM 17508 / OCM 812 / Nankai-3)).